The sequence spans 252 residues: CLAVATA3/ESR (CLE)-related protein 4A-2 (252 aa).

The N-terminal stretch at 1–21 (MAKNAMLCLLILRVVLALAFA) is a signal peptide. A required for secretion from the host cytoplasm to the host apoplasm region spans residues 21-83 (ATNKKGDEEP…SNQLPNNNWM (63 aa)). N-linked (GlcNAc...) asparagine glycosylation is present at Asn-32. The segment at 116–252 (RKTGMHSQRH…APAGPDPIHH (137 aa)) is disordered. 4 stretches are compositionally biased toward basic and acidic residues: residues 125–137 (HHEE…EKRV), 144–179 (PIHH…EKRV), 186–200 (PIHH…EKRA), and 207–242 (PTHH…EKRG). An A-1 repeat occupies 127–135 (EETTLEQEK). A 6 X approximate repeat A region spans residues 127–219 (EETTLEQEKR…HEETTLEQEK (93 aa)). The stretch at 136 to 147 (RVAGAGPDPIHH) is one CLE-1 repeat. The 6 X approximate repeat CLE stretch occupies residues 136 to 252 (RVAGAGPDPI…APAGPDPIHH (117 aa)). The stretch at 148–156 (QDTTLEQEK) is one A-2 repeat. The stretch at 157–168 (RAVPAGPDPKHH) is one CLE-2 repeat. An A-3 repeat occupies 169-177 (EETTLEQEK). Residues 178–189 (RVAGAGPDPIHH) form a CLE-3 repeat. The stretch at 190-198 (QDTTLEQEK) is one A-4 repeat. The stretch at 199–210 (RAVPAGPDPTHH) is one CLE-4 repeat. The A-5 repeat unit spans residues 211–219 (EETTLEQEK). The CLE-5 repeat unit spans residues 220–231 (RAVPAGPDPKHH). One copy of the A-6 repeat lies at 232 to 240 (EETTFEQEK). The CLE-6 repeat unit spans residues 241–252 (RGAPAGPDPIHH).

Belongs to the CLV3/ESR signal peptide family. Highly expressed exclusively within the dorsal esophageal gland cell during syncytium formation in host plants.

It localises to the secreted. It is found in the host cytoplasm. Its subcellular location is the host extracellular space. The protein resides in the extracellular space. The protein localises to the apoplast. In terms of biological role, mimics host plant CLE extracellular signal peptides that regulate cell fate. May play a role in the differentiation or division of feeding cells (syncytia) induced in plant roots during infection. The sequence is that of CLAVATA3/ESR (CLE)-related protein 4A-2 (CLE-4A-2) from Globodera rostochiensis (Golden nematode worm).